The sequence spans 78 residues: Putative membrane protein insertion efficiency factor (78 aa).

This sequence belongs to the UPF0161 family.

The protein resides in the cell membrane. Its function is as follows. Could be involved in insertion of integral membrane proteins into the membrane. This is Putative membrane protein insertion efficiency factor from Bacillus anthracis (strain A0248).